The chain runs to 120 residues: Eukaryotic translation initiation factor 4E-binding protein 2 (120 aa).

A phosphothreonine; by MTOR mark is found at T37 and T46. Positions 54–60 match the YXXXXLphi motif motif; that stretch reads YDRKFLL. S65 bears the Phosphoserine; by MTOR mark. Position 70 is a phosphothreonine; by MTOR (T70). S83 is subject to Phosphoserine. Deamidated asparagine is present on residues N99 and N102. The TOS motif signature appears at 116–120; that stretch reads FEMDI.

This sequence belongs to the eIF4E-binding protein family. In terms of assembly, hypophosphorylated EIF4EBP2 interacts with EIF4E; phosphorylation of EIF4EBP2 by mTORC1 causes dissociation of the complex allowing EIF4G1/EIF4G3 to bind and consequent initiation of translation. Interacts (via TOS motif) with RPTOR; promoting phosphorylation by mTORC1. Interacts with PCMT1; required to prevent isoaspartate accumulation and convert isoaspartate to Asp. Phosphorylation at Thr-37, Thr-46, Ser-65, Thr-70 and Ser-83 is mediated by MTOR and corresponds to the hyperphosphorylated form: it abolishes binding to EIF4E by inducing folding of intrinsically disordered regions. First phosphorylated at Thr-37 and Thr-46 by MTOR, inducing folding of region encompassing residues from Pro-18 to Arg-62 of into a four-stranded beta-domain that sequesters the helical YXXXXLPhi motif into a partly buried beta-strand, blocking accessibility to EIF4E. Protein phosphorylated at Thr-37 and Thr-46 is however unstable and subsequent phosphorylation at Ser-65, Thr-70 and Ser-83 is required to stabilize the fold, decreasing affinity for EIF4E by a factor of 4000. Phosphorylated in response to insulin, EGF and PDGF. In terms of processing, deamidated at Asn-99 and Asn-102 to aspartate (Asp) in brain. Deamidation promotes interaction with RPTOR, subsequent phosphorylation by mTORC1 and increased translation, leading to impair kinetics of excitatory synaptic transmission. Deamidation takes place during postnatal development, when the PI3K-Akt-mTOR signaling is reduced, suggesting it acts as a compensatory mechanism to promote translation despite attenuated PI3K-Akt-mTOR signaling in neuron development. Deamidation converts Asn residues into a mixture of Asp and isoaspartate; interactions with PCMT1 is required to prevent isoaspartate accumulation and convert isoaspartate to Asp. In terms of tissue distribution, enriched in brain.

Its subcellular location is the cytoplasm. The protein resides in the nucleus. Its function is as follows. Repressor of translation initiation involved in synaptic plasticity, learning and memory formation. Regulates EIF4E activity by preventing its assembly into the eIF4F complex: hypophosphorylated form of EIF4EBP2 competes with EIF4G1/EIF4G3 and strongly binds to EIF4E, leading to repress translation. In contrast, hyperphosphorylated form dissociates from EIF4E, allowing interaction between EIF4G1/EIF4G3 and EIF4E, leading to initiation of translation. EIF4EBP2 is enriched in brain and acts as a regulator of synapse activity and neuronal stem cell renewal via its ability to repress translation initiation. Mediates the regulation of protein translation by hormones, growth factors and other stimuli that signal through the MAP kinase and mTORC1 pathways. The chain is Eukaryotic translation initiation factor 4E-binding protein 2 from Mus musculus (Mouse).